A 370-amino-acid polypeptide reads, in one-letter code: D-alanine--D-alanine ligase (370 aa).

One can recognise an ATP-grasp domain in the interval 144–352 (KKIFADAGIP…YGALIERLVD (209 aa)). 177-232 (EEVLTYPVFVKPANLGSSVGISKATNKKELVDAMTEAFLYDRRVVVEQGVVAREIE) contributes to the ATP binding site. Residues aspartate 306, glutamate 319, and asparagine 321 each contribute to the Mg(2+) site.

The protein belongs to the D-alanine--D-alanine ligase family. It depends on Mg(2+) as a cofactor. Requires Mn(2+) as cofactor.

Its subcellular location is the cytoplasm. It catalyses the reaction 2 D-alanine + ATP = D-alanyl-D-alanine + ADP + phosphate + H(+). The protein operates within cell wall biogenesis; peptidoglycan biosynthesis. Functionally, cell wall formation. The sequence is that of D-alanine--D-alanine ligase from Listeria monocytogenes serovar 1/2a (strain ATCC BAA-679 / EGD-e).